The chain runs to 76 residues: Alpha/kappa-conotoxin-like pl14.1 (76 aa).

The signal sequence occupies residues 1-27 (MPSVRSVTCCCLLWMMLSVQLVTPGSP). Residues 28 to 39 (ATAQLSGQRTAR) constitute a propeptide that is removed on maturation. Disulfide bonds link C46–C61 and C50–C63. Residue N64 is modified to Asparagine amide. A propeptide spanning residues 65–76 (GKRDVVSSSMAV) is cleaved from the precursor.

Belongs to the conotoxin J superfamily. As to expression, expressed by the venom duct.

The protein resides in the secreted. Its function is as follows. Highly inhibits both nicotinic acetylcholine receptors (neuronal (alpha-3/beta-4) and muscular (alpha-1/beta-1/epsilon/delta) subtypes) and the voltage-gated potassium channel Kv1.6/KCNA6 subtype. The protein is Alpha/kappa-conotoxin-like pl14.1 of Conus planorbis (Planorbis cone).